Here is a 131-residue protein sequence, read N- to C-terminus: C-type natriuretic peptide 1 (131 aa).

The first 22 residues, M1–G22, serve as a signal peptide directing secretion. A propeptide spanning residues R23–R109 is cleaved from the precursor. A disulfide bridge connects residues C115 and C131.

The protein belongs to the natriuretic peptide family. In terms of tissue distribution, expressed in brain and to a low extent in atrium.

It is found in the secreted. In terms of biological role, exhibits natriuretic and vasodepressant activity. Has a cGMP-stimulating activity. This chain is C-type natriuretic peptide 1, found in Oncorhynchus mykiss (Rainbow trout).